A 266-amino-acid polypeptide reads, in one-letter code: Diphthine synthase (266 aa).

Residues Leu-9, Asp-84, Val-87, 112 to 113 (SI), Leu-169, Ala-210, and His-235 each bind S-adenosyl-L-methionine.

This sequence belongs to the diphthine synthase family. As to quaternary structure, homodimer.

It carries out the reaction 2-[(3S)-amino-3-carboxypropyl]-L-histidyl-[translation elongation factor 2] + 3 S-adenosyl-L-methionine = diphthine-[translation elongation factor 2] + 3 S-adenosyl-L-homocysteine + 3 H(+). It functions in the pathway protein modification; peptidyl-diphthamide biosynthesis. Functionally, S-adenosyl-L-methionine-dependent methyltransferase that catalyzes the trimethylation of the amino group of the modified target histidine residue in translation elongation factor 2 (EF-2), to form an intermediate called diphthine. The three successive methylation reactions represent the second step of diphthamide biosynthesis. The sequence is that of Diphthine synthase from Methanosarcina barkeri (strain Fusaro / DSM 804).